A 294-amino-acid polypeptide reads, in one-letter code: Tissue factor (294 aa).

Residues 1–28 (MAILVRPRLLAALAPTFLGCLLLQVIAG) form the signal peptide. The Extracellular portion of the chain corresponds to 29–251 (AGIPEKAFNL…TEQWKSFLGE (223 aa)). N-linked (GlcNAc...) asparagine glycosylation is found at Asn37 and Asn57. The cysteines at positions 75 and 83 are disulfide-linked. 2 N-linked (GlcNAc...) asparagine glycosylation sites follow: Asn169 and Asn200. A disulfide bridge connects residues Cys218 and Cys241. The short motif at 245-247 (WKS) is the WKS motif element. The chain crosses the membrane as a helical span at residues 252-274 (TLIIVGAVVLLATIFIILLSISL). Cys275 carries the S-palmitoyl cysteine lipid modification. Topologically, residues 275-294 (CKRRKNRAGQKGKNTPSRLA) are cytoplasmic.

The protein belongs to the tissue factor family. In terms of assembly, interacts with HSPE; the interaction, inhibited by heparin, promotes the generation of activated factor X and activates coagulation in the presence of activated factor VII.

The protein localises to the membrane. Its function is as follows. Initiates blood coagulation by forming a complex with circulating factor VII or VIIa. The [TF:VIIa] complex activates factors IX or X by specific limited proteolysis. TF plays a role in normal hemostasis by initiating the cell-surface assembly and propagation of the coagulation protease cascade. The sequence is that of Tissue factor (F3) from Mus musculus (Mouse).